Reading from the N-terminus, the 365-residue chain is Aminomethyltransferase (365 aa).

Belongs to the GcvT family. As to quaternary structure, the glycine cleavage system is composed of four proteins: P, T, L and H.

The catalysed reaction is N(6)-[(R)-S(8)-aminomethyldihydrolipoyl]-L-lysyl-[protein] + (6S)-5,6,7,8-tetrahydrofolate = N(6)-[(R)-dihydrolipoyl]-L-lysyl-[protein] + (6R)-5,10-methylene-5,6,7,8-tetrahydrofolate + NH4(+). Functionally, the glycine cleavage system catalyzes the degradation of glycine. The protein is Aminomethyltransferase of Yersinia enterocolitica serotype O:8 / biotype 1B (strain NCTC 13174 / 8081).